The chain runs to 764 residues: 1,4-alpha-glucan branching enzyme GlgB (764 aa).

Asp431 serves as the catalytic Nucleophile. Catalysis depends on Glu484, which acts as the Proton donor.

It belongs to the glycosyl hydrolase 13 family. GlgB subfamily. Monomer.

It catalyses the reaction Transfers a segment of a (1-&gt;4)-alpha-D-glucan chain to a primary hydroxy group in a similar glucan chain.. The protein operates within glycan biosynthesis; glycogen biosynthesis. Its function is as follows. Catalyzes the formation of the alpha-1,6-glucosidic linkages in glycogen by scission of a 1,4-alpha-linked oligosaccharide from growing alpha-1,4-glucan chains and the subsequent attachment of the oligosaccharide to the alpha-1,6 position. The protein is 1,4-alpha-glucan branching enzyme GlgB of Synechococcus sp. (strain CC9902).